The chain runs to 424 residues: Serine--tRNA ligase (424 aa).

L-serine is bound at residue 232–234 (TAE). An ATP-binding site is contributed by 263-265 (RRE). Glu-286 lines the L-serine pocket. 350 to 353 (EISS) contributes to the ATP binding site. Position 384 (Ser-384) interacts with L-serine.

This sequence belongs to the class-II aminoacyl-tRNA synthetase family. Type-1 seryl-tRNA synthetase subfamily. In terms of assembly, homodimer. The tRNA molecule binds across the dimer.

The protein localises to the cytoplasm. It catalyses the reaction tRNA(Ser) + L-serine + ATP = L-seryl-tRNA(Ser) + AMP + diphosphate + H(+). The enzyme catalyses tRNA(Sec) + L-serine + ATP = L-seryl-tRNA(Sec) + AMP + diphosphate + H(+). Its pathway is aminoacyl-tRNA biosynthesis; selenocysteinyl-tRNA(Sec) biosynthesis; L-seryl-tRNA(Sec) from L-serine and tRNA(Sec): step 1/1. In terms of biological role, catalyzes the attachment of serine to tRNA(Ser). Is also able to aminoacylate tRNA(Sec) with serine, to form the misacylated tRNA L-seryl-tRNA(Sec), which will be further converted into selenocysteinyl-tRNA(Sec). This chain is Serine--tRNA ligase, found in Prochlorococcus marinus subsp. pastoris (strain CCMP1986 / NIES-2087 / MED4).